A 184-amino-acid polypeptide reads, in one-letter code: Protein YrdA (184 aa).

It belongs to the gamma-class carbonic anhydrase family.

This chain is Protein YrdA (yrdA), found in Escherichia coli (strain K12).